Consider the following 423-residue polypeptide: Voltage-dependent calcium channel gamma-8 subunit (423 aa).

4 consecutive transmembrane segments (helical) span residues 19-39 (VQVL…TIAI), 127-147 (SSIF…CVAA), 157-177 (IILG…IGVI), and 207-227 (FGGL…NIYI). S251 and S254 each carry phosphoserine. The disordered stretch occupies residues 271–304 (RRSRSSSRGSSEASPSRDASPGGPGGPGFASTDI). Residues 276–287 (SSRGSSEASPSR) are compositionally biased toward low complexity. A helical transmembrane segment spans residues 318 to 338 (VAAGLASAGGGGSGAGVGAYG). 2 disordered regions span residues 342–363 (GAAG…GFLT) and 378–423 (VTVT…TTPV). A compositionally biased stretch (pro residues) spans 384–399 (PAAPAPAPAPPAPAAP). Positions 410-423 (ASNTNTLNRKTTPV) are enriched in polar residues.

It belongs to the PMP-22/EMP/MP20 family. CACNG subfamily. In terms of assembly, interacts with CACNA1C. Identified in a complex with the L-type calcium channel subunits CACNA1C, CACNA2D1 and either CACNB1 or CACNB2. Acts as an auxiliary subunit for AMPA-selective glutamate receptors (AMPARs). Found in a complex with GRIA1, GRIA2, GRIA3, GRIA4, CNIH2, CNIH3, CACNG2, CACNG3, CACNG4, CACNG5 and CACNG7. Interacts with CNIH2. Found in a complex with GRIA1, GRIA2, GRIA3, GRIA4, DLG4 and CNIH2. Palmitoylated. Probably palmitoylated by ZDHHC3 and ZDHHC7.

It localises to the cell membrane. The protein resides in the postsynaptic density membrane. Functionally, regulates the activity of L-type calcium channels that contain CACNA1C as pore-forming subunit. Regulates the trafficking and gating properties of AMPA-selective glutamate receptors (AMPARs). Promotes their targeting to the cell membrane and synapses and modulates their gating properties by slowing their rates of activation, deactivation and desensitization and by mediating their resensitization. Does not show subunit-specific AMPA receptor regulation and regulates all AMPAR subunits. Thought to stabilize the calcium channel in an inactivated (closed) state. This chain is Voltage-dependent calcium channel gamma-8 subunit, found in Mus musculus (Mouse).